An 859-amino-acid chain; its full sequence is Cadherin-related family member 1 (859 aa).

A signal peptide spans 1 to 21; that stretch reads MRRGPQVALVLGLLCIYLAQA. Over 22–701 the chain is Extracellular; the sequence is NFAPHFFDNG…LIQTKDNPMK (680 aa). 6 consecutive Cadherin domains span residues 36–135, 136–247, 248–354, 360–473, 474–577, and 569–691; these read NGNM…APRF, LQEP…APIF, VGTP…PPTF, PQNK…VPKF, TSHY…YPQF, and DVND…MAAF. N58 and N89 each carry an N-linked (GlcNAc...) asparagine glycan. 2 N-linked (GlcNAc...) asparagine glycosylation sites follow: N288 and N297. The helical transmembrane segment at 702 to 722 threads the bilayer; sequence AVGVLAGVMAIVVAITVLIST. Residues 723-859 lie on the Cytoplasmic side of the membrane; the sequence is ATFWRNKKSN…KKSLGNKAYV (137 aa). Positions 789 to 859 are disordered; the sequence is PPRAPALPPP…KKSLGNKAYV (71 aa). The span at 790–800 shows a compositional bias: pro residues; sequence PRAPALPPPPK. Residues 802 to 816 show a composition bias toward polar residues; the sequence is ASSTVAQQTVPTVSG. The segment covering 817–827 has biased composition (low complexity); the sequence is SLTPQPSQQLP.

In terms of assembly, interacts with PROM1. Post-translationally, undergoes proteolytic cleavage; produces a soluble 95 kDa N-terminal fragment and a 25 kDa cell-associated C-terminal fragment. As to expression, expressed in the retina. Strongly expressed by the mitral and tufted cells in the main and accessory olfactory bulbs. Also expressed in the septum and olfactory cortex. Weakly expressed in the triangular septal nucleus and piriform cortex.

The protein localises to the cell membrane. In terms of biological role, potential calcium-dependent cell-adhesion protein. May be required for the structural integrity of the outer segment (OS) of photoreceptor cells. This Rattus norvegicus (Rat) protein is Cadherin-related family member 1 (Cdhr1).